A 574-amino-acid chain; its full sequence is Septation ring formation regulator EzrA (574 aa).

The Extracellular segment spans residues 1-7 (MSIGLVI). A helical membrane pass occupies residues 8–26 (LVAVVALLLVVGYGTAVLM). Coiled coils occupy residues 26-47 (MRKR…LYNL), 105-189 (KAKH…QFVT), 258-346 (ESRF…FLIS), 375-415 (SETK…IEKD), and 455-494 (STSN…LEEE). Over 27–574 (RKRNEALLQN…YEKTRENIRF (548 aa)) the chain is Cytoplasmic.

It belongs to the EzrA family.

It is found in the cell membrane. In terms of biological role, negative regulator of FtsZ ring formation; modulates the frequency and position of FtsZ ring formation. Inhibits FtsZ ring formation at polar sites. Interacts either with FtsZ or with one of its binding partners to promote depolymerization. The protein is Septation ring formation regulator EzrA of Streptococcus sanguinis (strain SK36).